The chain runs to 328 residues: Beta-ketoacyl-[acyl-carrier-protein] synthase III (328 aa).

Residues Cys122 and His255 contribute to the active site. Residues 256-260 are ACP-binding; it reads QANIR. Residue Asn285 is part of the active site.

Belongs to the thiolase-like superfamily. FabH family. Homodimer.

Its subcellular location is the cytoplasm. It catalyses the reaction malonyl-[ACP] + acetyl-CoA + H(+) = 3-oxobutanoyl-[ACP] + CO2 + CoA. The protein operates within lipid metabolism; fatty acid biosynthesis. Its function is as follows. Catalyzes the condensation reaction of fatty acid synthesis by the addition to an acyl acceptor of two carbons from malonyl-ACP. Catalyzes the first condensation reaction which initiates fatty acid synthesis and may therefore play a role in governing the total rate of fatty acid production. Possesses both acetoacetyl-ACP synthase and acetyl transacylase activities. Its substrate specificity determines the biosynthesis of branched-chain and/or straight-chain of fatty acids. This is Beta-ketoacyl-[acyl-carrier-protein] synthase III from Herminiimonas arsenicoxydans.